A 358-amino-acid chain; its full sequence is E3 ubiquitin-protein ligase RFI2 (358 aa).

The segment at 1–34 is disordered; it reads MAGAKDSGCDDDLRIAGGCDPGKRGNPEDSSSPV. The segment at 38-83 adopts an RING-type; atypical zinc-finger fold; it reads CSICLESVLDDGTRSKAKLQCGHQFHLDCIGSAFNMKGAMQCPNCR. Disordered stretches follow at residues 174-201 and 248-313; these read GPAA…DHFH and SNQR…DQNV. Basic and acidic residues predominate over residues 187–201; sequence TDDHPWNSHSNDHFH. Residues 248–266 show a composition bias toward polar residues; that stretch reads SNQRSSPAINSYQGSSTQM. Residues 299 to 309 show a composition bias toward pro residues; that stretch reads LPPPPPPPPMP.

The protein localises to the nucleus. The catalysed reaction is S-ubiquitinyl-[E2 ubiquitin-conjugating enzyme]-L-cysteine + [acceptor protein]-L-lysine = [E2 ubiquitin-conjugating enzyme]-L-cysteine + N(6)-ubiquitinyl-[acceptor protein]-L-lysine.. Its pathway is protein modification; protein ubiquitination. Mediates phytochrome (phyA and phyB)-controlled seedling deetiolation responses such as hypocotyl elongation in response to red and far-red light. Required for light-induced expression of LHCB3 and CHALCONE SYNTHASE (CHS). Negatively regulates CONSTANS (CO) and FLOWERING LOCUS T (FT) expression and photoperiodic flowering. The polypeptide is E3 ubiquitin-protein ligase RFI2 (Arabidopsis thaliana (Mouse-ear cress)).